Here is a 278-residue protein sequence, read N- to C-terminus: Undecaprenyl-diphosphatase 3 (278 aa).

The next 6 membrane-spanning stretches (helical) occupy residues 42–62 (DITA…LLYF), 88–108 (YRFG…GVAF), 119–139 (LWFV…ADHV), 187–207 (VAVT…AAAL), 224–244 (ATII…AWLL), and 254–274 (VFIG…ATGI).

This sequence belongs to the UppP family.

Its subcellular location is the cell membrane. The enzyme catalyses di-trans,octa-cis-undecaprenyl diphosphate + H2O = di-trans,octa-cis-undecaprenyl phosphate + phosphate + H(+). In terms of biological role, catalyzes the dephosphorylation of undecaprenyl diphosphate (UPP). Confers resistance to bacitracin. The chain is Undecaprenyl-diphosphatase 3 from Frankia casuarinae (strain DSM 45818 / CECT 9043 / HFP020203 / CcI3).